The sequence spans 255 residues: 5'-nucleotidase SurE (255 aa).

4 residues coordinate a divalent metal cation: D8, D9, S40, and N93.

The protein belongs to the SurE nucleotidase family. Requires a divalent metal cation as cofactor.

It localises to the cytoplasm. It carries out the reaction a ribonucleoside 5'-phosphate + H2O = a ribonucleoside + phosphate. In terms of biological role, nucleotidase that shows phosphatase activity on nucleoside 5'-monophosphates. The sequence is that of 5'-nucleotidase SurE from Rhodopseudomonas palustris (strain ATCC BAA-98 / CGA009).